A 79-amino-acid polypeptide reads, in one-letter code: RNA-binding protein Hfq (79 aa).

The 61-residue stretch at 9 to 69 folds into the Sm domain; sequence DTFLNHLRKE…ISTFTPQRPV (61 aa).

This sequence belongs to the Hfq family. As to quaternary structure, homohexamer.

Functionally, RNA chaperone that binds small regulatory RNA (sRNAs) and mRNAs to facilitate mRNA translational regulation in response to envelope stress, environmental stress and changes in metabolite concentrations. Also binds with high specificity to tRNAs. In Brevibacillus brevis (strain 47 / JCM 6285 / NBRC 100599), this protein is RNA-binding protein Hfq.